A 187-amino-acid polypeptide reads, in one-letter code: Elongation factor P (187 aa).

This sequence belongs to the elongation factor P family.

The protein resides in the cytoplasm. It functions in the pathway protein biosynthesis; polypeptide chain elongation. Involved in peptide bond synthesis. Stimulates efficient translation and peptide-bond synthesis on native or reconstituted 70S ribosomes in vitro. Probably functions indirectly by altering the affinity of the ribosome for aminoacyl-tRNA, thus increasing their reactivity as acceptors for peptidyl transferase. This Desulfatibacillum aliphaticivorans protein is Elongation factor P.